We begin with the raw amino-acid sequence, 372 residues long: Glutamate 5-kinase (372 aa).

Residue K14 coordinates ATP. Substrate is bound by residues S54, D141, and N153. 173-174 (TD) is a binding site for ATP. One can recognise a PUA domain in the interval 280–358 (RGHVVIDDGA…GEIESVLGYM (79 aa)).

Belongs to the glutamate 5-kinase family.

Its subcellular location is the cytoplasm. It carries out the reaction L-glutamate + ATP = L-glutamyl 5-phosphate + ADP. It functions in the pathway amino-acid biosynthesis; L-proline biosynthesis; L-glutamate 5-semialdehyde from L-glutamate: step 1/2. Functionally, catalyzes the transfer of a phosphate group to glutamate to form L-glutamate 5-phosphate. This is Glutamate 5-kinase from Paraburkholderia phytofirmans (strain DSM 17436 / LMG 22146 / PsJN) (Burkholderia phytofirmans).